Reading from the N-terminus, the 116-residue chain is Protein Wnt-5b (116 aa).

Ser-1 carries the O-palmitoleoyl serine; by PORCN lipid modification. Residues Asn-69 and Asn-83 are each glycosylated (N-linked (GlcNAc...) asparagine). An intrachain disulfide couples Cys-82 to Cys-97.

It belongs to the Wnt family. Palmitoleoylation is required for efficient binding to frizzled receptors. Depalmitoleoylation leads to Wnt signaling pathway inhibition.

Its subcellular location is the secreted. It localises to the extracellular space. It is found in the extracellular matrix. Functionally, ligand for members of the frizzled family of seven transmembrane receptors. Probable developmental protein. May be a signaling molecule which affects the development of discrete regions of tissues. Is likely to signal over only few cell diameters. This Alopias vulpinus (Common thresher shark) protein is Protein Wnt-5b (WNT-5B).